Consider the following 783-residue polypeptide: Spindle pole body protein ppc89 (783 aa).

Serine 157 is modified (phosphoserine). 4 disordered regions span residues 180-216 (FDSP…ETPS), 434-458 (KESN…MNEA), 471-504 (ENKS…PTSG), and 528-610 (LSQS…MKGN). Polar residues-rich tracts occupy residues 201 to 216 (RSKT…ETPS), 437 to 453 (NVTS…SKPL), and 474 to 504 (SGAN…PTSG). Positions 536 to 551 (PVKHRKRRPKSKRRIT) are enriched in basic residues. Residues 566–590 (ESDEGSEEISLDSEYSDILSDDGDF) show a composition bias toward acidic residues.

It is found in the cytoplasm. Its subcellular location is the cytoskeleton. The protein localises to the microtubule organizing center. It localises to the spindle pole body. In terms of biological role, has a role in meiosis. This Schizosaccharomyces pombe (strain 972 / ATCC 24843) (Fission yeast) protein is Spindle pole body protein ppc89 (ppc89).